The sequence spans 98 residues: NADH-ubiquinone oxidoreductase chain 4L (98 aa).

3 helical membrane passes run 1-21, 29-49, and 61-81; these read MSITYMNMFMAFTISLLGLLM, SLLCLEGMMLSLFVMMTMAIL, and IILLVFAACEAALGLSLLVMV.

This sequence belongs to the complex I subunit 4L family. As to quaternary structure, core subunit of respiratory chain NADH dehydrogenase (Complex I) which is composed of 45 different subunits.

The protein resides in the mitochondrion inner membrane. It carries out the reaction a ubiquinone + NADH + 5 H(+)(in) = a ubiquinol + NAD(+) + 4 H(+)(out). Core subunit of the mitochondrial membrane respiratory chain NADH dehydrogenase (Complex I) which catalyzes electron transfer from NADH through the respiratory chain, using ubiquinone as an electron acceptor. Part of the enzyme membrane arm which is embedded in the lipid bilayer and involved in proton translocation. The protein is NADH-ubiquinone oxidoreductase chain 4L (MT-ND4L) of Mesophylla macconnelli (MacConnell's bat).